The sequence spans 357 residues: 4-hydroxy-3-methylbut-2-en-1-yl diphosphate synthase (flavodoxin) (357 aa).

4 residues coordinate [4Fe-4S] cluster: Cys264, Cys267, Cys299, and Glu306.

This sequence belongs to the IspG family. [4Fe-4S] cluster is required as a cofactor.

The enzyme catalyses (2E)-4-hydroxy-3-methylbut-2-enyl diphosphate + oxidized [flavodoxin] + H2O + 2 H(+) = 2-C-methyl-D-erythritol 2,4-cyclic diphosphate + reduced [flavodoxin]. It functions in the pathway isoprenoid biosynthesis; isopentenyl diphosphate biosynthesis via DXP pathway; isopentenyl diphosphate from 1-deoxy-D-xylulose 5-phosphate: step 5/6. In terms of biological role, converts 2C-methyl-D-erythritol 2,4-cyclodiphosphate (ME-2,4cPP) into 1-hydroxy-2-methyl-2-(E)-butenyl 4-diphosphate. This Campylobacter jejuni subsp. jejuni serotype O:6 (strain 81116 / NCTC 11828) protein is 4-hydroxy-3-methylbut-2-en-1-yl diphosphate synthase (flavodoxin).